Consider the following 198-residue polypeptide: Chromophore lyase CpcT/CpeT 3 (198 aa).

The protein belongs to the CpcT/CpeT biliprotein lyase family.

Covalently attaches a chromophore to Cys residue(s) of phycobiliproteins. The sequence is that of Chromophore lyase CpcT/CpeT 3 from Synechococcus sp. (strain JA-3-3Ab) (Cyanobacteria bacterium Yellowstone A-Prime).